The sequence spans 274 residues: Large ribosomal subunit protein uL2c (274 aa).

The interval 224–274 (NPVDHPHGGGEGRAPIGRKKPTTPWGYPALGRKSRKRNKYSEKFILRHRSK) is disordered.

The protein belongs to the universal ribosomal protein uL2 family. As to quaternary structure, part of the 50S ribosomal subunit.

It localises to the plastid. It is found in the chloroplast. This Ipomoea purpurea (Common morning glory) protein is Large ribosomal subunit protein uL2c (rpl2).